Consider the following 73-residue polypeptide: Large ribosomal subunit protein bL31 (73 aa).

This sequence belongs to the bacterial ribosomal protein bL31 family. Type A subfamily. In terms of assembly, part of the 50S ribosomal subunit.

Binds the 23S rRNA. The chain is Large ribosomal subunit protein bL31 from Allorhizobium ampelinum (strain ATCC BAA-846 / DSM 112012 / S4) (Agrobacterium vitis (strain S4)).